The chain runs to 397 residues: uncharacterized protein (397 aa).

Helical transmembrane passes span 142–162 (WETI…VGIA), 191–211 (SQLL…SVVL), 242–258 (ALTG…TYFL), and 260–280 (APWL…SAGF).

This sequence belongs to the cation diffusion facilitator (CDF) transporter (TC 2.A.4) family. SLC30A subfamily.

It is found in the membrane. This is an uncharacterized protein from Schizosaccharomyces pombe (strain 972 / ATCC 24843) (Fission yeast).